We begin with the raw amino-acid sequence, 211 residues long: Ribonuclease MRP protein subunit rmp1 (211 aa).

A helical membrane pass occupies residues 73–93 (PALGLVLLGILARVWFVMGGI). Position 156 is a phosphoserine (S156). The tract at residues 178 to 211 (SQGTKRKSKNSNSTVKKKKKRARKGRDEIDDIFG) is disordered. Basic residues predominate over residues 181 to 201 (TKRKSKNSNSTVKKKKKRARK).

As to quaternary structure, component of RNase MRP complex which consists of an RNA moiety and at least 10 protein subunits.

It localises to the membrane. The protein resides in the nucleus. The protein localises to the nucleolus. Functions as part of ribonuclease MRP (RNase MRP), which is involved in rRNA processing in mitochondria. The sequence is that of Ribonuclease MRP protein subunit rmp1 from Schizosaccharomyces pombe (strain 972 / ATCC 24843) (Fission yeast).